The sequence spans 366 residues: MLNSCINKIKKKKNIKKIILMLIFIFSVNFFTKNTNQGKQYEDKLNKDFTNIKKINIKNKLVNQKEFLLQLEKIKIFSPNLYSKNISIYNAILKWLKKRAEINELNKFRIKLFQMKGVDQYGNVKITGYYTPIVKASKIKKNNFIYPIYRTPSNFKKNEKLPQRKDIYNGFLKKEYILAYSDSLINNFIMEIQGSGFIDYGDNKPLIFFGYAKKNNWPYTSIGQILIKNGDIQKKNISMNTIKNWCTHHTQKEIQNLLEKNKSFVFFQETKRKEVYGSSAVPLVEKAAIAVDKSVIKIGSVVLVKIPVLDKNGIFIHKYEMHLLIALDVGGVIKGQHFDVYQGIGEKAGKLAGFYNHYGYAWVLKI.

The catalysed reaction is Exolytic cleavage of the (1-&gt;4)-beta-glycosidic linkage between N-acetylmuramic acid (MurNAc) and N-acetylglucosamine (GlcNAc) residues in peptidoglycan, from either the reducing or the non-reducing ends of the peptidoglycan chains, with concomitant formation of a 1,6-anhydrobond in the MurNAc residue.. Functionally, murein-degrading enzyme. May play a role in recycling of muropeptides during cell elongation and/or cell division. This Buchnera aphidicola subsp. Schizaphis graminum (strain Sg) protein is Membrane-bound lytic murein transglycosylase A homolog (mltA).